A 121-amino-acid chain; its full sequence is Large ribosomal subunit protein bL19 (121 aa).

It belongs to the bacterial ribosomal protein bL19 family.

Functionally, this protein is located at the 30S-50S ribosomal subunit interface and may play a role in the structure and function of the aminoacyl-tRNA binding site. The polypeptide is Large ribosomal subunit protein bL19 (Borreliella burgdorferi (strain ZS7) (Borrelia burgdorferi)).